Reading from the N-terminus, the 212-residue chain is Ras-related protein Rab-17 (212 aa).

At Ser29 the chain carries Phosphoserine. GTP-binding residues include Gly31, Lys32, Ser33, and Thr50. Ser33, Thr50, and Asp73 together coordinate Mg(2+). A Switch 1 motif is present at residues 43 to 54 (DFKSILPTVGCA). A Switch 2 motif is present at residues 75–91 (AGQEKYHSVCHLYFRGA). 5 residues coordinate GTP: Gly76, Asn132, Lys133, Asp135, and Ala163. S-geranylgeranyl cysteine attachment occurs at residues Cys209 and Cys210.

This sequence belongs to the small GTPase superfamily. Rab family. It depends on Mg(2+) as a cofactor. Expressed in melanocytes (at protein level).

Its subcellular location is the recycling endosome membrane. It is found in the melanosome. The protein resides in the cell projection. It localises to the dendrite. It catalyses the reaction GTP + H2O = GDP + phosphate + H(+). Its activity is regulated as follows. Regulated by guanine nucleotide exchange factors (GEFs) which promote the exchange of bound GDP for free GTP. Regulated by GTPase activating proteins (GAPs) which increase the GTP hydrolysis activity. Inhibited by GDP dissociation inhibitors (GDIs). The small GTPases Rab are key regulators of intracellular membrane trafficking, from the formation of transport vesicles to their fusion with membranes. Rabs cycle between an inactive GDP-bound form and an active GTP-bound form that is able to recruit to membranes different set of downstream effectors directly responsible for vesicle formation, movement, tethering and fusion. RAB17 is involved in transcytosis, the directed movement of endocytosed material through the cell and its exocytosis from the plasma membrane at the opposite side. Mainly observed in epithelial cells, transcytosis mediates for instance, the transcellular transport of immunoglobulins from the basolateral surface to the apical surface. Most probably controls membrane trafficking through apical recycling endosomes in a post-endocytic step of transcytosis. Required for melanosome transport and release from melanocytes, it also regulates dendrite and dendritic spine development. May also play a role in cell migration. The protein is Ras-related protein Rab-17 of Homo sapiens (Human).